The primary structure comprises 107 residues: Thioredoxin (107 aa).

Residues 2 to 107 (SVSQVTDASF…LESTLNKYIS (106 aa)) form the Thioredoxin domain. Catalysis depends on nucleophile residues C31 and C34. Cysteines 31 and 34 form a disulfide.

The protein belongs to the thioredoxin family.

The protein localises to the plastid. The protein resides in the chloroplast. Participates in various redox reactions through the reversible oxidation of its active center dithiol to a disulfide and catalyzes dithiol-disulfide exchange reactions. The protein is Thioredoxin (trxA) of Porphyra purpurea (Red seaweed).